Reading from the N-terminus, the 388-residue chain is Outer membrane protein assembly factor BamB (388 aa).

A signal peptide spans 1–17 (MVLSLLSVMLLSGYKFL).

The protein belongs to the BamB family. As to quaternary structure, part of the Bam complex, which is composed of the outer membrane protein BamA, and four lipoproteins BamB, BamC, BamD and BamE.

The protein localises to the cell outer membrane. In terms of biological role, part of the outer membrane protein assembly complex, which is involved in assembly and insertion of beta-barrel proteins into the outer membrane. The chain is Outer membrane protein assembly factor BamB from Moranella endobia (strain PCIT).